The sequence spans 495 residues: 4-aminobutyrate aminotransferase (495 aa).

160 to 161 (GS) serves as a coordination point for pyridoxal 5'-phosphate. Residue arginine 216 participates in substrate binding. Lysine 350 bears the N6-(pyridoxal phosphate)lysine mark. Threonine 374 contributes to the pyridoxal 5'-phosphate binding site.

It belongs to the class-III pyridoxal-phosphate-dependent aminotransferase family. As to quaternary structure, homodimer. Pyridoxal 5'-phosphate serves as cofactor.

The enzyme catalyses 4-aminobutanoate + 2-oxoglutarate = succinate semialdehyde + L-glutamate. The protein is 4-aminobutyrate aminotransferase (gabT) of Dictyostelium discoideum (Social amoeba).